The following is a 500-amino-acid chain: Pyridine nucleotide-disulfide oxidoreductase domain-containing protein 1 (500 aa).

An N-acetylmethionine modification is found at Met-1.

The protein belongs to the class-I pyridine nucleotide-disulfide oxidoreductase family. PYROXD1 subfamily. FAD is required as a cofactor.

The protein localises to the nucleus. The protein resides in the cytoplasm. It localises to the myofibril. Its subcellular location is the sarcomere. Probable FAD-dependent oxidoreductase; involved in the cellular oxidative stress response. Required for normal sarcomere structure and muscle fiber integrity. This Pongo abelii (Sumatran orangutan) protein is Pyridine nucleotide-disulfide oxidoreductase domain-containing protein 1 (PYROXD1).